We begin with the raw amino-acid sequence, 148 residues long: Transcriptional regulator MraZ (148 aa).

SpoVT-AbrB domains follow at residues 5 to 51 (STQL…PQPV) and 80 to 123 (ASDV…DMAK).

The protein belongs to the MraZ family. Forms oligomers.

It localises to the cytoplasm. It is found in the nucleoid. The chain is Transcriptional regulator MraZ from Nitrosomonas europaea (strain ATCC 19718 / CIP 103999 / KCTC 2705 / NBRC 14298).